A 269-amino-acid chain; its full sequence is Glutamate racemase (269 aa).

Substrate-binding positions include 14–15 (DS) and 46–47 (YS). C78 acts as the Proton donor/acceptor in catalysis. 79–80 (NT) provides a ligand contact to substrate. C189 acts as the Proton donor/acceptor in catalysis. 190-191 (TH) provides a ligand contact to substrate.

It belongs to the aspartate/glutamate racemases family.

The enzyme catalyses L-glutamate = D-glutamate. It participates in cell wall biogenesis; peptidoglycan biosynthesis. Its function is as follows. Provides the (R)-glutamate required for cell wall biosynthesis. This is Glutamate racemase from Haemophilus influenzae (strain ATCC 51907 / DSM 11121 / KW20 / Rd).